The chain runs to 301 residues: Ornithine carbamoyltransferase (301 aa).

Carbamoyl phosphate contacts are provided by residues 53 to 56 (STRT), Gln-80, Arg-104, and 131 to 134 (HPCQ). L-ornithine contacts are provided by residues Asn-162, Asp-221, and 225 to 226 (SI). Residues 260–261 (CL) and Arg-288 contribute to the carbamoyl phosphate site.

It belongs to the aspartate/ornithine carbamoyltransferase superfamily. OTCase family.

The protein localises to the cytoplasm. The catalysed reaction is carbamoyl phosphate + L-ornithine = L-citrulline + phosphate + H(+). Its pathway is amino-acid biosynthesis; L-arginine biosynthesis; L-arginine from L-ornithine and carbamoyl phosphate: step 1/3. In terms of biological role, reversibly catalyzes the transfer of the carbamoyl group from carbamoyl phosphate (CP) to the N(epsilon) atom of ornithine (ORN) to produce L-citrulline. In Cenarchaeum symbiosum (strain A), this protein is Ornithine carbamoyltransferase.